The following is a 92-amino-acid chain: Small ribosomal subunit protein uS19c (92 aa).

It belongs to the universal ribosomal protein uS19 family.

It localises to the plastid. It is found in the chloroplast. Its function is as follows. Protein S19 forms a complex with S13 that binds strongly to the 16S ribosomal RNA. The protein is Small ribosomal subunit protein uS19c of Phalaenopsis aphrodite subsp. formosana (Moth orchid).